The sequence spans 128 residues: MESKEKRAVNNLSMENTNQENEEKEEKEQVANKGEPLALPLDAGEYCVPRGNRRRFRVRQPILQYRWDMMHRLGEPQARMREENMERIGEEVRQLMEKLREKQLSHSLRAVSTDPPHHDHHDEFCLMP.

Residues 1-37 (MESKEKRAVNNLSMENTNQENEEKEEKEQVANKGEPL) form a disordered region. Residue Ser-105 is modified to Phosphoserine. The disordered stretch occupies residues 107–128 (SLRAVSTDPPHHDHHDEFCLMP). Basic and acidic residues predominate over residues 115–128 (PPHHDHHDEFCLMP). The his cluster stretch occupies residues 117–121 (HHDHH). Cys-125 provides a ligand contact to Zn(2+).

The protein belongs to the BEX family. In terms of assembly, interacts with neurotrophin receptor p75NTR/NGFR. Interacts with OMP. Post-translationally, phosphorylated. Phosphorylation of Ser-105 protects it from the proteasome. In terms of processing, ubiquitinated. Degraded by the proteasome.

It is found in the nucleus. The protein localises to the cytoplasm. Functionally, signaling adapter molecule involved in p75NTR/NGFR signaling. Plays a role in cell cycle progression and neuronal differentiation. Inhibits neuronal differentiation in response to nerve growth factor (NGF). May act as a link between the cell cycle and neurotrophic factor signaling, possibly by functioning as an upstream modulator of receptor signaling, coordinating biological responses to external signals with internal cellular states. In absence of reductive stress, acts as a pseudosubstrate for the CRL2(FEM1B) complex: associates with FEM1B via zinc, thereby preventing association between FEM1B and its substrates. The chain is Protein BEX1 (BEX1) from Macaca fascicularis (Crab-eating macaque).